The following is a 106-amino-acid chain: NADH dehydrogenase [ubiquinone] 1 alpha subcomplex subunit 8-B (106 aa).

At serine 2 the chain carries N-acetylserine. CHCH domains are found at residues 26 to 67 and 68 to 106; these read GMRC…LKDL and HQKC…CPLK. Short sequence motifs (cx9C motif) lie at residues 29-39, 49-59, and 71-81; these read CMPENVAFLKC, CLDKGRDVTRC, and CQKEMDDYVGC. 4 cysteine pairs are disulfide-bonded: cysteine 29/cysteine 59, cysteine 39/cysteine 49, cysteine 71/cysteine 103, and cysteine 81/cysteine 92. The Cx10C motif signature appears at 92–103; that stretch reads CRKEQEAFEKVC.

It belongs to the complex I NDUFA8 subunit family. In terms of assembly, complex I is composed of at least 49 different subunits.

The protein localises to the mitochondrion. It is found in the mitochondrion intermembrane space. In terms of biological role, accessory subunit of the mitochondrial membrane respiratory chain NADH dehydrogenase (Complex I), that is believed not to be involved in catalysis. Complex I functions in the transfer of electrons from NADH to the respiratory chain. The immediate electron acceptor for the enzyme is believed to be ubiquinone. The polypeptide is NADH dehydrogenase [ubiquinone] 1 alpha subcomplex subunit 8-B (Arabidopsis thaliana (Mouse-ear cress)).